Here is an 86-residue protein sequence, read N- to C-terminus: MKLKIKKGATVQVITGSDKGKKGTVIAVDANAMKIQVQGVKVQTHYDKKDGLLKKEGFIDYSNVKLVEAASKEKKTSKKATKSKSA.

It belongs to the universal ribosomal protein uL24 family. In terms of assembly, part of the 50S ribosomal subunit.

Its function is as follows. One of two assembly initiator proteins, it binds directly to the 5'-end of the 23S rRNA, where it nucleates assembly of the 50S subunit. In terms of biological role, one of the proteins that surrounds the polypeptide exit tunnel on the outside of the subunit. The polypeptide is Large ribosomal subunit protein uL24 (Bdellovibrio bacteriovorus (strain ATCC 15356 / DSM 50701 / NCIMB 9529 / HD100)).